We begin with the raw amino-acid sequence, 244 residues long: MMNHTPLLLGIRERLIFALDVPSRTQALEWIDQLGDAISFYKIGMELLASGEYFQVLDDLASRGKRVFVDLKFFDIPATVAGVIRRLSQWPISYCTIHGWHAPMMQAATEANTSNMHLLAVTVLTSMTREDLAKMGINREPVDVVVERALAAHMAGMSGVIASGQEAAAIRHAIGSGFSIVCPGIRTNHVPHNDQQRTIGIKAAFANGADAIVVGRPIRMAQDPQAAAEAMQTEIMTALTEPST.

Substrate-binding positions include D20, K42, 70–79 (DLKFFDIPAT), T125, R186, Q195, G215, and R216. K72 (proton donor) is an active-site residue.

The protein belongs to the OMP decarboxylase family. Type 1 subfamily. As to quaternary structure, homodimer.

It carries out the reaction orotidine 5'-phosphate + H(+) = UMP + CO2. The protein operates within pyrimidine metabolism; UMP biosynthesis via de novo pathway; UMP from orotate: step 2/2. Functionally, catalyzes the decarboxylation of orotidine 5'-monophosphate (OMP) to uridine 5'-monophosphate (UMP). The sequence is that of Orotidine 5'-phosphate decarboxylase from Xylella fastidiosa (strain M23).